The sequence spans 473 residues: Zinc finger and SCAN domain-containing protein 21 (473 aa).

Residue lysine 27 forms a Glycyl lysine isopeptide (Lys-Gly) (interchain with G-Cter in SUMO2) linkage. Positions 45-127 (RQRFRQFGYH…TLLEDLEREL (83 aa)) constitute an SCAN box domain. Positions 127-167 (LDEPGHQVSTPPNEQKPVWEKISSSGTAKESPSSMQPQPLE) are disordered. The span at 148 to 165 (ISSSGTAKESPSSMQPQP) shows a compositional bias: polar residues. Glycyl lysine isopeptide (Lys-Gly) (interchain with G-Cter in SUMO2) cross-links involve residues lysine 221 and lysine 232. The interval 244–272 (LENEKGTKPPLQEAGSKKGRESVPTKPTP) is disordered. The span at 258–272 (GSKKGRESVPTKPTP) shows a compositional bias: basic and acidic residues. 7 C2H2-type zinc fingers span residues 277 to 299 (YICAECGKAFSNSSNLTKHRRTH), 305 to 327 (YVCTKCGKAFSHSSNLTLHYRTH), 333 to 354 (YDCKCGKAFGQSSDLLKHQRMH), 360 to 382 (YQCKDCGKAFSGKGSLIRHYRIH), 388 to 410 (YQCNECGKSFSQHAGLSSHQRLH), 416 to 438 (YKCKECGKAFNHSSNFNKHHRIH), and 444 to 466 (YWCHHCGKTFCSKSNLSKHQRVH). Residue lysine 349 forms a Glycyl lysine isopeptide (Lys-Gly) (interchain with G-Cter in SUMO2) linkage.

It belongs to the krueppel C2H2-type zinc-finger protein family.

It is found in the nucleus. Strong transcriptional activator. Plays an important role in spermatogenesis; essential for the progression of meiotic prophase I in spermatocytes. This is Zinc finger and SCAN domain-containing protein 21 (ZSCAN21) from Pan troglodytes (Chimpanzee).